The chain runs to 452 residues: Diphthine methyltransferase (452 aa).

7 WD repeats span residues P79–L130, E131–L185, Q186–G229, K230–K273, Q274–Q313, K314–M403, and R404–E448. S353 is modified (phosphoserine). The disordered stretch occupies residues S371 to G402. Basic and acidic residues predominate over residues H378–A390.

Belongs to the DPH7 family. As to quaternary structure, interacts with INCA1.

It carries out the reaction diphthine methyl ester-[translation elongation factor 2] + H2O = diphthine-[translation elongation factor 2] + methanol + H(+). It functions in the pathway protein modification; peptidyl-diphthamide biosynthesis. In terms of biological role, catalyzes the demethylation of diphthine methyl ester to form diphthine, an intermediate diphthamide biosynthesis, a post-translational modification of histidine which occurs in translation elongation factor 2 (EEF2) which can be ADP-ribosylated by diphtheria toxin and by Pseudomonas exotoxin A (Eta). In Homo sapiens (Human), this protein is Diphthine methyltransferase (DPH7).